The following is a 174-amino-acid chain: uncharacterized protein (174 aa).

Residues 126–146 form a helical membrane-spanning segment; the sequence is AIDEFIITVIPVVLGSGIPLF.

The protein to B.subtilis YyaP.

The protein localises to the membrane. This is an uncharacterized protein from Bacillus subtilis (strain 168).